The chain runs to 447 residues: Tubulin beta chain (447 aa).

Residues Gln-11, Glu-69, Ser-138, Gly-142, Thr-143, Gly-144, Asn-204, and Asn-226 each coordinate GTP. Glu-69 contacts Mg(2+). Residues 421–447 (EYQQYQDASISEGEEEYEEEAPMEPEE) are disordered. Residues 432-447 (EGEEEYEEEAPMEPEE) show a composition bias toward acidic residues.

Belongs to the tubulin family. Dimer of alpha and beta chains. A typical microtubule is a hollow water-filled tube with an outer diameter of 25 nm and an inner diameter of 15 nM. Alpha-beta heterodimers associate head-to-tail to form protofilaments running lengthwise along the microtubule wall with the beta-tubulin subunit facing the microtubule plus end conferring a structural polarity. Microtubules usually have 13 protofilaments but different protofilament numbers can be found in some organisms and specialized cells. The cofactor is Mg(2+).

It localises to the cytoplasm. It is found in the cytoskeleton. Its function is as follows. Tubulin is the major constituent of microtubules, a cylinder consisting of laterally associated linear protofilaments composed of alpha- and beta-tubulin heterodimers. Microtubules grow by the addition of GTP-tubulin dimers to the microtubule end, where a stabilizing cap forms. Below the cap, tubulin dimers are in GDP-bound state, owing to GTPase activity of alpha-tubulin. This chain is Tubulin beta chain, found in Rhynchosporium secalis (Barley scald fungus).